Consider the following 555-residue polypeptide: Glucose-6-phosphate isomerase (555 aa).

Residues 169 to 170 (GS), 219 to 224 (SKTFTT), Gln-364, Glu-368, His-399, and Lys-521 each bind D-glucose 6-phosphate. Glu-368 functions as the Proton donor in the catalytic mechanism. Catalysis depends on residues His-399 and Lys-521.

This sequence belongs to the GPI family. As to quaternary structure, homodimer.

The protein localises to the cytoplasm. It localises to the cytosol. It carries out the reaction alpha-D-glucose 6-phosphate = beta-D-fructose 6-phosphate. It participates in carbohydrate degradation; glycolysis; D-glyceraldehyde 3-phosphate and glycerone phosphate from D-glucose: step 2/4. Its function is as follows. In the cytoplasm, catalyzes the conversion of glucose-6-phosphate to fructose-6-phosphate, the second step in glycolysis, and the reverse reaction during gluconeogenesis. This Eremothecium gossypii (strain ATCC 10895 / CBS 109.51 / FGSC 9923 / NRRL Y-1056) (Yeast) protein is Glucose-6-phosphate isomerase (PGI1).